Here is a 233-residue protein sequence, read N- to C-terminus: MSGATSTGDVGYDELAVLKLLALDGAHRGEVKVSCGDLASRLDASSQTASRRLQALDDADHVTRDLVSDGQWITVTDAGRHALKHEYEDYRRIFEDPGELALAGTVTSGMGEGRHYISLPGYNRQFAEKLGYEPYPGTLNVDLPPDGQRARAGIQALDGVDIDAWEDEDRTYGSATCYACTVVGDGTDFDGAHVIIPDRTHHDDDQLEIIAPVKLRERLGLLDDDEVTIRVEA.

The unknown stretch occupies residues 1–99 (MSGATSTGDV…YRRIFEDPGE (99 aa)). The interval 100 to 233 (LALAGTVTSG…DDEVTIRVEA (134 aa)) is riboflavin kinase. Residue 109-114 (GMGEGR) participates in CDP binding. The Mg(2+) site is built by T138 and N140. T200 and E208 together coordinate FMN. 213–216 (VKLR) lines the CDP pocket.

This sequence belongs to the archaeal riboflavin kinase family. Mg(2+) serves as cofactor.

It catalyses the reaction riboflavin + CTP = CDP + FMN + H(+). The protein operates within cofactor biosynthesis; FMN biosynthesis; FMN from riboflavin (CTP route): step 1/1. Functionally, catalyzes the CTP-dependent phosphorylation of riboflavin (vitamin B2) to form flavin mononucleotide (FMN). The protein is Riboflavin kinase (ribK) of Halobacterium salinarum (strain ATCC 700922 / JCM 11081 / NRC-1) (Halobacterium halobium).